The sequence spans 443 residues: Methyl-coenzyme M reductase II subunit beta (443 aa).

Residue Y367 coordinates coenzyme M. G369 is a coenzyme B binding site.

This sequence belongs to the methyl-coenzyme M reductase beta subunit family. As to quaternary structure, MCR is a hexamer of two alpha, two beta, and two gamma chains, forming a dimer of heterotrimers. Coenzyme F430 is required as a cofactor.

The enzyme catalyses coenzyme B + methyl-coenzyme M = methane + coenzyme M-coenzyme B heterodisulfide. Its pathway is one-carbon metabolism; methyl-coenzyme M reduction; methane from methyl-coenzyme M: step 1/1. In terms of biological role, component of the methyl-coenzyme M reductase (MCR) I that catalyzes the reductive cleavage of methyl-coenzyme M (CoM-S-CH3 or 2-(methylthio)ethanesulfonate) using coenzyme B (CoB or 7-mercaptoheptanoylthreonine phosphate) as reductant which results in the production of methane and the mixed heterodisulfide of CoB and CoM (CoM-S-S-CoB). This is the final step in methanogenesis. In Methanothermobacter marburgensis (strain ATCC BAA-927 / DSM 2133 / JCM 14651 / NBRC 100331 / OCM 82 / Marburg) (Methanobacterium thermoautotrophicum), this protein is Methyl-coenzyme M reductase II subunit beta.